The sequence spans 201 residues: L(+)-tartrate dehydratase subunit beta (201 aa).

His-37 is an active-site residue.

This sequence belongs to the class-I fumarase family. As to quaternary structure, heterotetramer of two alpha and two beta subunits.

It carries out the reaction (2R,3R)-tartrate = oxaloacetate + H2O. The chain is L(+)-tartrate dehydratase subunit beta (ttdB) from Shigella sonnei (strain Ss046).